The primary structure comprises 597 residues: Electron transfer flavoprotein-ubiquinone oxidoreductase, mitochondrial (597 aa).

An FAD-binding site is contributed by 53-67 (VVIVGGGPSGLSAAI). An intramembrane segment occupies 91–112 (IGGHTLSGAVIETRALDELIPN). A ubiquinone-binding residues include Gly285 and Gly286. The stretch at 409–426 (IDPATYDKNIRDTYVVKE) is an intramembrane region. 4 residues coordinate [4Fe-4S] cluster: Cys540, Cys566, Cys569, and Cys572. Residues 557–586 (KRLQINAQNCIHCKTCDIKDPQQNINWVTP) form the 4Fe-4S ferredoxin-type domain.

Belongs to the ETF-QO/FixC family. In terms of assembly, monomer. The cofactor is [4Fe-4S] cluster. Requires FAD as cofactor.

The protein resides in the mitochondrion inner membrane. The enzyme catalyses a ubiquinone + reduced [electron-transfer flavoprotein] = a ubiquinol + oxidized [electron-transfer flavoprotein] + H(+). Its function is as follows. Accepts electrons from ETF and reduces ubiquinone. This is Electron transfer flavoprotein-ubiquinone oxidoreductase, mitochondrial (let-721) from Caenorhabditis elegans.